A 116-amino-acid chain; its full sequence is Ribonuclease P protein component (116 aa).

Belongs to the RnpA family. Consists of a catalytic RNA component (M1 or rnpB) and a protein subunit.

It carries out the reaction Endonucleolytic cleavage of RNA, removing 5'-extranucleotides from tRNA precursor.. RNaseP catalyzes the removal of the 5'-leader sequence from pre-tRNA to produce the mature 5'-terminus. It can also cleave other RNA substrates such as 4.5S RNA. The protein component plays an auxiliary but essential role in vivo by binding to the 5'-leader sequence and broadening the substrate specificity of the ribozyme. This chain is Ribonuclease P protein component, found in Bacillus velezensis (strain DSM 23117 / BGSC 10A6 / LMG 26770 / FZB42) (Bacillus amyloliquefaciens subsp. plantarum).